Here is a 355-residue protein sequence, read N- to C-terminus: 3-isopropylmalate dehydrogenase (355 aa).

Residues arginine 90, arginine 100, arginine 128, and aspartate 222 each coordinate substrate. 3 residues coordinate Mg(2+): aspartate 222, aspartate 246, and aspartate 250. Glycine 280 to asparagine 292 contributes to the NAD(+) binding site.

Belongs to the isocitrate and isopropylmalate dehydrogenases family. LeuB type 1 subfamily. In terms of assembly, homodimer. The cofactor is Mg(2+). Requires Mn(2+) as cofactor.

It localises to the cytoplasm. The enzyme catalyses (2R,3S)-3-isopropylmalate + NAD(+) = 4-methyl-2-oxopentanoate + CO2 + NADH. Its pathway is amino-acid biosynthesis; L-leucine biosynthesis; L-leucine from 3-methyl-2-oxobutanoate: step 3/4. Functionally, catalyzes the oxidation of 3-carboxy-2-hydroxy-4-methylpentanoate (3-isopropylmalate) to 3-carboxy-4-methyl-2-oxopentanoate. The product decarboxylates to 4-methyl-2 oxopentanoate. In Burkholderia lata (strain ATCC 17760 / DSM 23089 / LMG 22485 / NCIMB 9086 / R18194 / 383), this protein is 3-isopropylmalate dehydrogenase.